The sequence spans 539 residues: Trigger factor (539 aa).

Residues 163–252 enclose the PPIase FKBP-type domain; the sequence is GDQLTVQIET…VLDVQERLLP (90 aa). 2 stretches are compositionally biased toward low complexity: residues 434–447 and 475–484; these read SFEQ…ASEP and AASPEAASEP. A disordered region spans residues 434–539; that stretch reads SFEQAASPEA…DVATPEARTE (106 aa). A compositionally biased stretch (polar residues) spans 509–528; sequence TETPIVSQEENGESVENQSV.

It belongs to the FKBP-type PPIase family. Tig subfamily.

Its subcellular location is the cytoplasm. It catalyses the reaction [protein]-peptidylproline (omega=180) = [protein]-peptidylproline (omega=0). Its function is as follows. Involved in protein export. Acts as a chaperone by maintaining the newly synthesized protein in an open conformation. Functions as a peptidyl-prolyl cis-trans isomerase. The polypeptide is Trigger factor (Roseiflexus sp. (strain RS-1)).